We begin with the raw amino-acid sequence, 119 residues long: Methylglyoxal synthase (119 aa).

An MGS-like domain is found at 1 to 119 (MRIALIAHDK…GTADLIIRQF (119 aa)). Substrate is bound by residues His-8, Lys-12, 34–37 (TGTT), and 54–55 (SG). Asp-60 functions as the Proton donor/acceptor in the catalytic mechanism. Residue His-87 coordinates substrate.

Belongs to the methylglyoxal synthase family.

The enzyme catalyses dihydroxyacetone phosphate = methylglyoxal + phosphate. Catalyzes the formation of methylglyoxal from dihydroxyacetone phosphate. This Clostridium botulinum (strain Alaska E43 / Type E3) protein is Methylglyoxal synthase.